Reading from the N-terminus, the 377-residue chain is Lactosylceramide 1,3-N-acetyl-beta-D-glucosaminyltransferase A (377 aa).

Residues 1–12 (MLISARRLRRCQ) are Cytoplasmic-facing. Residues 13–30 (FLQLLASCFVLSLMALLV) form a helical; Signal-anchor for type II membrane protein membrane-spanning segment. The Lumenal portion of the chain corresponds to 31–377 (QEDNSLISHV…DTYPCSAAWS (347 aa)). N-linked (GlcNAc...) asparagine glycosylation is found at Asn56, Asn167, and Asn275.

Belongs to the glycosyltransferase 31 family.

The protein localises to the golgi apparatus membrane. It catalyses the reaction a beta-D-Gal-(1-&gt;4)-beta-D-Glc-(1&lt;-&gt;1)-Cer(d18:1(4E)) + UDP-N-acetyl-alpha-D-glucosamine = a beta-D-GlcNAc-(1-&gt;3)-beta-D-Gal-(1-&gt;4)-beta-D-Glc-(1&lt;-&gt;1)-Cer(d18:1(4E)) + UDP + H(+). The catalysed reaction is a neolactoside nLc4Cer(d18:1(4E)) + UDP-N-acetyl-alpha-D-glucosamine = a neolactoside IV(3)-beta-GlcNAc-nLc4Cer(d18:1(4E)) + UDP + H(+). The protein operates within protein modification; protein glycosylation. In terms of biological role, beta-1,3-N-acetylglucosaminyltransferase that plays a key role in the synthesis of lacto- or neolacto-series carbohydrate chains on glycolipids. The sequence is that of Lactosylceramide 1,3-N-acetyl-beta-D-glucosaminyltransferase A (b3gnt5-a) from Xenopus laevis (African clawed frog).